The chain runs to 226 residues: Agamous-like MADS-box protein AP3 (226 aa).

An MADS-box domain is found at 1 to 61; it reads MARGKIEIKR…GKLHEYISPS (61 aa). One can recognise a K-box domain in the interval 84 to 174; sequence YERMQENLKK…LHEFDARDRD (91 aa).

In terms of tissue distribution, expressed during flower development in stamens and petals.

It localises to the nucleus. In terms of biological role, probable transcription factor involved in flower development. This Vitis vinifera (Grape) protein is Agamous-like MADS-box protein AP3.